A 60-amino-acid polypeptide reads, in one-letter code: Large ribosomal subunit protein bL32 (60 aa).

Disordered regions lie at residues 1-22 (MAVQ…HNAL) and 34-60 (GETH…KSEA). A compositionally biased stretch (basic residues) spans 9–19 (SPSKRGMHRSH).

This sequence belongs to the bacterial ribosomal protein bL32 family.

This Variovorax paradoxus (strain S110) protein is Large ribosomal subunit protein bL32.